Reading from the N-terminus, the 71-residue chain is Large ribosomal subunit protein bL31 (71 aa).

The protein belongs to the bacterial ribosomal protein bL31 family. Type A subfamily. In terms of assembly, part of the 50S ribosomal subunit.

Binds the 23S rRNA. In Metamycoplasma arthritidis (strain 158L3-1) (Mycoplasma arthritidis), this protein is Large ribosomal subunit protein bL31.